The chain runs to 203 residues: Transcriptional regulator GfcR 2 (203 aa).

This sequence belongs to the purine/pyrimidine phosphoribosyltransferase family. GfcR subfamily.

The chain is Transcriptional regulator GfcR 2 from Methanosarcina acetivorans (strain ATCC 35395 / DSM 2834 / JCM 12185 / C2A).